Here is a 199-residue protein sequence, read N- to C-terminus: Zinc finger matrin-type protein 2 (199 aa).

A2 carries the post-translational modification N-acetylalanine. Glycyl lysine isopeptide (Lys-Gly) (interchain with G-Cter in SUMO2) cross-links involve residues K8, K36, K39, K45, K55, K61, K64, K70, K102, and K123. The interval 27 to 46 (KRLTEEREKKDGKPVQPVKR) is disordered. A Matrin-type zinc finger spans residues 80 to 104 (YYCNVCDCVVKDSINFLDHINGKKH). Residues 150–173 (REEEEKAKAYKKEKQKEKKRRAEE) are compositionally biased toward basic and acidic residues. Residues 150-175 (REEEEKAKAYKKEKQKEKKRRAEEDL) form a disordered region.

As to quaternary structure, component of the spliceosome B complex.

It localises to the nucleus. Involved in pre-mRNA splicing as a component of the spliceosome. This is Zinc finger matrin-type protein 2 (ZMAT2) from Homo sapiens (Human).